The following is a 646-amino-acid chain: Threonine--tRNA ligase (646 aa).

Residues 1 to 63 (MAQISLTFPD…ETDAKIAIHT (63 aa)) form the TGS domain. Residues 247-544 (DHRKLGREME…LIENYAGKLP (298 aa)) are catalytic. Residues cysteine 344, histidine 395, and histidine 521 each coordinate Zn(2+).

Belongs to the class-II aminoacyl-tRNA synthetase family. In terms of assembly, homodimer. The cofactor is Zn(2+).

It localises to the cytoplasm. It carries out the reaction tRNA(Thr) + L-threonine + ATP = L-threonyl-tRNA(Thr) + AMP + diphosphate + H(+). Functionally, catalyzes the attachment of threonine to tRNA(Thr) in a two-step reaction: L-threonine is first activated by ATP to form Thr-AMP and then transferred to the acceptor end of tRNA(Thr). Also edits incorrectly charged L-seryl-tRNA(Thr). The sequence is that of Threonine--tRNA ligase from Cereibacter sphaeroides (strain ATCC 17023 / DSM 158 / JCM 6121 / CCUG 31486 / LMG 2827 / NBRC 12203 / NCIMB 8253 / ATH 2.4.1.) (Rhodobacter sphaeroides).